The chain runs to 346 residues: Elongation factor Ts (346 aa).

Positions Thr-80–Val-83 are involved in Mg(2+) ion dislocation from EF-Tu.

This sequence belongs to the EF-Ts family.

It is found in the cytoplasm. Functionally, associates with the EF-Tu.GDP complex and induces the exchange of GDP to GTP. It remains bound to the aminoacyl-tRNA.EF-Tu.GTP complex up to the GTP hydrolysis stage on the ribosome. The chain is Elongation factor Ts from Streptococcus uberis (strain ATCC BAA-854 / 0140J).